The primary structure comprises 542 residues: Esterase 6 (542 aa).

The signal sequence occupies residues 1 to 19 (MNYVGLIIVLSCLWLGSNA). N-linked (GlcNAc...) asparagine glycosylation is present at asparagine 40. Cysteine 84 and cysteine 103 are joined by a disulfide. Serine 207 functions as the Acyl-ester intermediate in the catalytic mechanism. Cysteine 259 and cysteine 271 are oxidised to a cystine. 2 N-linked (GlcNAc...) asparagine glycosylation sites follow: asparagine 418 and asparagine 454. Residue histidine 464 is the Charge relay system of the active site. Residues cysteine 512 and cysteine 533 are joined by a disulfide bond.

This sequence belongs to the type-B carboxylesterase/lipase family. Monomer.

It is found in the secreted. It catalyses the reaction a carboxylic ester + H2O = an alcohol + a carboxylate + H(+). Functionally, transferred from the ejaculatory bulbs of males to the female genitals upon copulation, plays an important role in the reproductive biology. In Drosophila simulans (Fruit fly), this protein is Esterase 6 (Est-6).